The chain runs to 251 residues: Hydroxyacylglutathione hydrolase (251 aa).

Positions 53, 55, 57, 58, 110, 127, and 165 each coordinate Zn(2+).

It belongs to the metallo-beta-lactamase superfamily. Glyoxalase II family. Monomer. The cofactor is Zn(2+).

It carries out the reaction an S-(2-hydroxyacyl)glutathione + H2O = a 2-hydroxy carboxylate + glutathione + H(+). It functions in the pathway secondary metabolite metabolism; methylglyoxal degradation; (R)-lactate from methylglyoxal: step 2/2. In terms of biological role, thiolesterase that catalyzes the hydrolysis of S-D-lactoyl-glutathione to form glutathione and D-lactic acid. The protein is Hydroxyacylglutathione hydrolase of Escherichia coli (strain SE11).